A 301-amino-acid polypeptide reads, in one-letter code: Diaminopimelate epimerase (301 aa).

Substrate contacts are provided by N15, Q47, and N67. The Proton donor role is filled by C76. Substrate contacts are provided by residues 77–78, N163, N197, and 215–216; these read GN and ER. C224 serves as the catalytic Proton acceptor. 225–226 is a binding site for substrate; sequence GS.

The protein belongs to the diaminopimelate epimerase family. In terms of assembly, homodimer.

It is found in the cytoplasm. The enzyme catalyses (2S,6S)-2,6-diaminopimelate = meso-2,6-diaminopimelate. Its pathway is amino-acid biosynthesis; L-lysine biosynthesis via DAP pathway; DL-2,6-diaminopimelate from LL-2,6-diaminopimelate: step 1/1. In terms of biological role, catalyzes the stereoinversion of LL-2,6-diaminopimelate (L,L-DAP) to meso-diaminopimelate (meso-DAP), a precursor of L-lysine and an essential component of the bacterial peptidoglycan. This is Diaminopimelate epimerase from Rhizobium meliloti (strain 1021) (Ensifer meliloti).